Here is a 110-residue protein sequence, read N- to C-terminus: ORC1-type DNA replication protein 3 (110 aa).

8–12 (SGKSL) lines the ATP pocket.

The protein belongs to the CDC6/cdc18 family.

Functionally, involved in regulation of DNA replication. This is ORC1-type DNA replication protein 3 (orc3) from Halobacterium salinarum (strain ATCC 700922 / JCM 11081 / NRC-1) (Halobacterium halobium).